The primary structure comprises 1296 residues: Probable serine/threonine protein kinase IREH1 (1296 aa).

3 disordered regions span residues 1 to 274 (MVFK…SESP), 457 to 480 (SGAGRSYSAAKVPSTKKAYSQEQH), and 524 to 553 (SPALKTVKEAPASEEQNDSKVEPPNIVGSR). The span at 10–32 (SSKKSGSSSPDSSNSPRSVGSNS) shows a compositional bias: low complexity. S32 is subject to Phosphoserine. Composition is skewed to basic and acidic residues over residues 68-77 (DGLKKKDGSS), 101-112 (EVKKPPPPEVKE), and 178-208 (RKKEAGSSKLGLEENMDRTRPSDNKSDRDSL). Positions 214–249 (PPRSLSPTLPPSGSRLQNVASSSGTGRSEMSSGRSG) are enriched in low complexity. Residues 602 to 621 (CRICEEEVPTTHVEDHSRVC) form a C2H2-type; atypical zinc finger. The tract at residues 724–750 (FGPKSDQGMTTSSASSMTPRSPIPTPR) is disordered. Positions 730–740 (QGMTTSSASSM) are enriched in polar residues. The Protein kinase domain occupies 882 to 1171 (FEIIKPISRG…AAEVKQHIFF (290 aa)). ATP is bound by residues 888–896 (ISRGAFGRV) and K911. Catalysis depends on D1005, which acts as the Proton acceptor. S1070 carries the phosphoserine modification. Positions 1172–1277 (KDINWDTLAR…KNLSQLASIN (106 aa)) constitute an AGC-kinase C-terminal domain. Residues 1214–1245 (PSGEVPDYSDADSMTNSSGCSSNHHEEGEAEE) are disordered. Positions 1225-1235 (DSMTNSSGCSS) are enriched in polar residues. Residues 1236-1245 (NHHEEGEAEE) show a composition bias toward basic and acidic residues.

Belongs to the protein kinase superfamily. AGC Ser/Thr protein kinase family.

It catalyses the reaction L-seryl-[protein] + ATP = O-phospho-L-seryl-[protein] + ADP + H(+). The catalysed reaction is L-threonyl-[protein] + ATP = O-phospho-L-threonyl-[protein] + ADP + H(+). Its function is as follows. May be involved in root hair elongation. The polypeptide is Probable serine/threonine protein kinase IREH1 (Arabidopsis thaliana (Mouse-ear cress)).